Reading from the N-terminus, the 312-residue chain is MKVAVLGAAGGIGQALALLLKTQLPSGSELSLYDIAPVTPGVAVDLSHIPTAVKIKGFSGEDATPALEGADVVLISAGVARKPGMDRSDLFNVNAGIVKNLVQQVAKNCPKACIGIITNPVNTTVAIAAEVLKKAGVYDKNKLFGVTTLDIIRSNTFVAELKGKQPGEVEVPVIGGHSGVTILPLLSQVPGVSFTEQEVADLTKRIQNAGTEVVEAKAGGGSATLSMGQAAARFGLSLVRALQGEQGVVECAYVEGDGQYARFFSQPLLLGKNGVEERKSIGTLSAFEQNALEGMLDTLKKDIALGKEFVNK.

NAD(+) contacts are provided by residues 7–13 and Asp34; that span reads GAAGGIG. The substrate site is built by Arg81 and Arg87. Residues Asn94 and 117-119 contribute to the NAD(+) site; that span reads ITN. The substrate site is built by Asn119 and Arg153. The active-site Proton acceptor is the His177. Met227 is an NAD(+) binding site.

The protein belongs to the LDH/MDH superfamily. MDH type 1 family. As to quaternary structure, homodimer.

The enzyme catalyses (S)-malate + NAD(+) = oxaloacetate + NADH + H(+). Its function is as follows. Catalyzes the reversible oxidation of malate to oxaloacetate. The protein is Malate dehydrogenase of Shigella flexneri serotype 5b (strain 8401).